We begin with the raw amino-acid sequence, 373 residues long: DNA replication and repair protein RecF (373 aa).

An ATP-binding site is contributed by 30 to 37; that stretch reads GENAQGKT.

Belongs to the RecF family.

Its subcellular location is the cytoplasm. In terms of biological role, the RecF protein is involved in DNA metabolism; it is required for DNA replication and normal SOS inducibility. RecF binds preferentially to single-stranded, linear DNA. It also seems to bind ATP. This chain is DNA replication and repair protein RecF, found in Limosilactobacillus fermentum (strain NBRC 3956 / LMG 18251) (Lactobacillus fermentum).